The following is a 130-amino-acid chain: Small ribosomal subunit protein uS8 (130 aa).

Belongs to the universal ribosomal protein uS8 family. As to quaternary structure, part of the 30S ribosomal subunit. Contacts proteins S5 and S12.

Functionally, one of the primary rRNA binding proteins, it binds directly to 16S rRNA central domain where it helps coordinate assembly of the platform of the 30S subunit. The sequence is that of Small ribosomal subunit protein uS8 from Vibrio atlanticus (strain LGP32) (Vibrio splendidus (strain Mel32)).